The chain runs to 194 residues: Imidazoleglycerol-phosphate dehydratase (194 aa).

Belongs to the imidazoleglycerol-phosphate dehydratase family.

It is found in the cytoplasm. It catalyses the reaction D-erythro-1-(imidazol-4-yl)glycerol 3-phosphate = 3-(imidazol-4-yl)-2-oxopropyl phosphate + H2O. It participates in amino-acid biosynthesis; L-histidine biosynthesis; L-histidine from 5-phospho-alpha-D-ribose 1-diphosphate: step 6/9. This Lactiplantibacillus plantarum (strain ATCC BAA-793 / NCIMB 8826 / WCFS1) (Lactobacillus plantarum) protein is Imidazoleglycerol-phosphate dehydratase.